The following is a 204-amino-acid chain: Holliday junction branch migration complex subunit RuvA (204 aa).

The domain I stretch occupies residues 1–64 (MIGRLCGTAE…EDAITLFGFI (64 aa)). The interval 65 to 143 (DAAERDWFRL…AMPTGSAFIP (79 aa)) is domain II. The tract at residues 144–154 (TGTAPPVAPPQ) is flexible linker. The tract at residues 154-204 (QGKLADALSALVNLGYRRAEAEAALSAVQAEAGEDAALDELIRGGLRRLAR) is domain III.

Belongs to the RuvA family. In terms of assembly, homotetramer. Forms an RuvA(8)-RuvB(12)-Holliday junction (HJ) complex. HJ DNA is sandwiched between 2 RuvA tetramers; dsDNA enters through RuvA and exits via RuvB. An RuvB hexamer assembles on each DNA strand where it exits the tetramer. Each RuvB hexamer is contacted by two RuvA subunits (via domain III) on 2 adjacent RuvB subunits; this complex drives branch migration. In the full resolvosome a probable DNA-RuvA(4)-RuvB(12)-RuvC(2) complex forms which resolves the HJ.

Its subcellular location is the cytoplasm. Its function is as follows. The RuvA-RuvB-RuvC complex processes Holliday junction (HJ) DNA during genetic recombination and DNA repair, while the RuvA-RuvB complex plays an important role in the rescue of blocked DNA replication forks via replication fork reversal (RFR). RuvA specifically binds to HJ cruciform DNA, conferring on it an open structure. The RuvB hexamer acts as an ATP-dependent pump, pulling dsDNA into and through the RuvAB complex. HJ branch migration allows RuvC to scan DNA until it finds its consensus sequence, where it cleaves and resolves the cruciform DNA. In Acidiphilium cryptum (strain JF-5), this protein is Holliday junction branch migration complex subunit RuvA.